Consider the following 329-residue polypeptide: DNA-directed RNA polymerase subunit alpha (329 aa).

The alpha N-terminal domain (alpha-NTD) stretch occupies residues 1 to 231; the sequence is MQNSLLKPKA…EQLAVFAQLE (231 aa). The segment at 249–329 is alpha C-terminal domain (alpha-CTD); sequence FDPILLRPVD…SWPPAALEKR (81 aa).

The protein belongs to the RNA polymerase alpha chain family. As to quaternary structure, homodimer. The RNAP catalytic core consists of 2 alpha, 1 beta, 1 beta' and 1 omega subunit. When a sigma factor is associated with the core the holoenzyme is formed, which can initiate transcription.

It carries out the reaction RNA(n) + a ribonucleoside 5'-triphosphate = RNA(n+1) + diphosphate. Its function is as follows. DNA-dependent RNA polymerase catalyzes the transcription of DNA into RNA using the four ribonucleoside triphosphates as substrates. The protein is DNA-directed RNA polymerase subunit alpha of Albidiferax ferrireducens (strain ATCC BAA-621 / DSM 15236 / T118) (Rhodoferax ferrireducens).